The primary structure comprises 348 residues: Nicotinate-nucleotide--dimethylbenzimidazole phosphoribosyltransferase (348 aa).

Glu-316 acts as the Proton acceptor in catalysis.

This sequence belongs to the CobT family.

The enzyme catalyses 5,6-dimethylbenzimidazole + nicotinate beta-D-ribonucleotide = alpha-ribazole 5'-phosphate + nicotinate + H(+). It functions in the pathway nucleoside biosynthesis; alpha-ribazole biosynthesis; alpha-ribazole from 5,6-dimethylbenzimidazole: step 1/2. Catalyzes the synthesis of alpha-ribazole-5'-phosphate from nicotinate mononucleotide (NAMN) and 5,6-dimethylbenzimidazole (DMB). This chain is Nicotinate-nucleotide--dimethylbenzimidazole phosphoribosyltransferase, found in Xanthomonas campestris pv. campestris (strain B100).